Reading from the N-terminus, the 322-residue chain is 3-alpha-hydroxysteroid dehydrogenase (322 aa).

At M1 the chain carries Blocked amino end (Met). NADP(+) contacts are provided by residues 20 to 24 (GFGTT) and D50. The active-site Proton donor is the Y55. Position 117 (H117) interacts with substrate. Residues 166–167 (SN), Q190, and 216–221 (YCTLGS) each bind NADP(+). W227 serves as a coordination point for substrate. 270 to 280 (RSFNAKRIKEL) provides a ligand contact to NADP(+).

Belongs to the aldo/keto reductase family. Monomer. In terms of tissue distribution, in brain, highest levels found in olfactory bulb. Moderate levels present in cerebellum, cerebral cortex, hypothalamus and pituitary. Low levels present in amygdala, brain stem, caudate putamen, cingulate cortex, hippocampus, midbrain, and thalamus.

The protein resides in the cytoplasm. The enzyme catalyses a 3alpha-hydroxysteroid + NADP(+) = a 3-oxosteroid + NADPH + H(+). It catalyses the reaction a 3alpha-hydroxysteroid + NAD(+) = a 3-oxosteroid + NADH + H(+). With respect to regulation, potently inhibited by the nonsteroidal anti-inflammatory drugs (NSAID). Its function is as follows. Besides being a 3-alpha-hydroxysteroid dehydrogenase, the enzyme can accomplish diverse functions: as quinone reductase, as an aromatic alcohol dehydrogenase, as dihydrodiol dehydrogenase, and as 9-, 11-, and 15-hydroxyprostaglandin dehydrogenase. This Rattus norvegicus (Rat) protein is 3-alpha-hydroxysteroid dehydrogenase (Akr1c9).